We begin with the raw amino-acid sequence, 264 residues long: 3-methyl-2-oxobutanoate hydroxymethyltransferase (264 aa).

Mg(2+)-binding residues include aspartate 41 and aspartate 80. Residues 41-42 (DS), aspartate 80, and lysine 109 contribute to the 3-methyl-2-oxobutanoate site. Glutamate 111 contacts Mg(2+). Glutamate 178 acts as the Proton acceptor in catalysis.

The protein belongs to the PanB family. Homodecamer; pentamer of dimers. Requires Mg(2+) as cofactor.

The protein resides in the cytoplasm. The enzyme catalyses 3-methyl-2-oxobutanoate + (6R)-5,10-methylene-5,6,7,8-tetrahydrofolate + H2O = 2-dehydropantoate + (6S)-5,6,7,8-tetrahydrofolate. The protein operates within cofactor biosynthesis; (R)-pantothenate biosynthesis; (R)-pantoate from 3-methyl-2-oxobutanoate: step 1/2. Functionally, catalyzes the reversible reaction in which hydroxymethyl group from 5,10-methylenetetrahydrofolate is transferred onto alpha-ketoisovalerate to form ketopantoate. This is 3-methyl-2-oxobutanoate hydroxymethyltransferase from Thermosipho melanesiensis (strain DSM 12029 / CIP 104789 / BI429).